The primary structure comprises 362 residues: Phosphoserine aminotransferase (362 aa).

The L-glutamate site is built by serine 9 and arginine 42. Pyridoxal 5'-phosphate is bound by residues 76–77, tryptophan 102, threonine 153, aspartate 174, and glutamine 197; that span reads GR. Lysine 198 is subject to N6-(pyridoxal phosphate)lysine. 239-240 lines the pyridoxal 5'-phosphate pocket; the sequence is NT.

Belongs to the class-V pyridoxal-phosphate-dependent aminotransferase family. SerC subfamily. Homodimer. Pyridoxal 5'-phosphate serves as cofactor.

Its subcellular location is the cytoplasm. The enzyme catalyses O-phospho-L-serine + 2-oxoglutarate = 3-phosphooxypyruvate + L-glutamate. It carries out the reaction 4-(phosphooxy)-L-threonine + 2-oxoglutarate = (R)-3-hydroxy-2-oxo-4-phosphooxybutanoate + L-glutamate. It participates in amino-acid biosynthesis; L-serine biosynthesis; L-serine from 3-phospho-D-glycerate: step 2/3. It functions in the pathway cofactor biosynthesis; pyridoxine 5'-phosphate biosynthesis; pyridoxine 5'-phosphate from D-erythrose 4-phosphate: step 3/5. Functionally, catalyzes the reversible conversion of 3-phosphohydroxypyruvate to phosphoserine and of 3-hydroxy-2-oxo-4-phosphonooxybutanoate to phosphohydroxythreonine. This Escherichia coli O17:K52:H18 (strain UMN026 / ExPEC) protein is Phosphoserine aminotransferase.